The following is a 408-amino-acid chain: Energy-coupling factor transporter ATP-binding protein EcfA1 (408 aa).

An ABC transporter domain is found at 140–374 (IEIKNLSFKY…KEFLRNIQLD (235 aa)). 174–181 (GHNGSGKS) is an ATP binding site.

The protein belongs to the ABC transporter superfamily. Energy-coupling factor EcfA family. In terms of assembly, forms a stable energy-coupling factor (ECF) transporter complex composed of 2 membrane-embedded substrate-binding proteins (S component), 2 ATP-binding proteins (A component) and 2 transmembrane proteins (T component).

The protein resides in the cell membrane. Functionally, ATP-binding (A) component of a common energy-coupling factor (ECF) ABC-transporter complex. Unlike classic ABC transporters this ECF transporter provides the energy necessary to transport a number of different substrates. In Mycoplasma capricolum subsp. capricolum (strain California kid / ATCC 27343 / NCTC 10154), this protein is Energy-coupling factor transporter ATP-binding protein EcfA1.